Consider the following 512-residue polypeptide: Histidine ammonia-lyase (512 aa).

A cross-link (5-imidazolinone (Ala-Gly)) is located at residues 142–144; it reads ASG. Residue serine 143 is modified to 2,3-didehydroalanine (Ser).

The protein belongs to the PAL/histidase family. Contains an active site 4-methylidene-imidazol-5-one (MIO), which is formed autocatalytically by cyclization and dehydration of residues Ala-Ser-Gly.

The protein resides in the cytoplasm. The enzyme catalyses L-histidine = trans-urocanate + NH4(+). The protein operates within amino-acid degradation; L-histidine degradation into L-glutamate; N-formimidoyl-L-glutamate from L-histidine: step 1/3. The polypeptide is Histidine ammonia-lyase (Bartonella tribocorum (strain CIP 105476 / IBS 506)).